Reading from the N-terminus, the 462-residue chain is UDP-N-acetylmuramoylalanine--D-glutamate ligase (462 aa).

112-118 (GTNGKTT) contributes to the ATP binding site.

This sequence belongs to the MurCDEF family.

It localises to the cytoplasm. The enzyme catalyses UDP-N-acetyl-alpha-D-muramoyl-L-alanine + D-glutamate + ATP = UDP-N-acetyl-alpha-D-muramoyl-L-alanyl-D-glutamate + ADP + phosphate + H(+). The protein operates within cell wall biogenesis; peptidoglycan biosynthesis. Its function is as follows. Cell wall formation. Catalyzes the addition of glutamate to the nucleotide precursor UDP-N-acetylmuramoyl-L-alanine (UMA). The chain is UDP-N-acetylmuramoylalanine--D-glutamate ligase from Nostoc sp. (strain PCC 7120 / SAG 25.82 / UTEX 2576).